The following is a 2393-amino-acid chain: Leucine-rich repeat serine/threonine-protein kinase 1 (2393 aa).

10 ANK repeats span residues 56-86 (HGRT…SLNL), 90-120 (RGKT…PMKS), 123-152 (EGHC…KESE), 197-226 (EDET…HLLQ), 230-259 (SKDT…QLVK), 264-293 (EGST…PSEF), 317-347 (ECRT…SIDG), 361-390 (RGRT…DVNL), 407-437 (IGSG…DTDN), and 439-464 (ALRL…FADP). LRR repeat units lie at residues 532 to 553 (AITR…LFQM), 555 to 576 (SLRS…TYYI), 580 to 600 (SLEI…QFLS), 604 to 625 (QLQQ…IWLC), and 627 to 648 (ALKE…ARAS). Residues 649 to 675 (RGERPRLNNSNNNFNTQSPTQESNPIV) form a disordered region. 3 LRR repeats span residues 718 to 739 (TLTT…LACT), 742 to 763 (RLLI…ACVP), and 765 to 787 (HLRT…SPLH). The segment at 797–844 (TSNGSMLPKRRNSPARQHRSRSKSAVRSQRSLSVSRHHALIDPQKEEE) is disordered. Residues 804 to 820 (PKRRNSPARQHRSRSKS) show a composition bias toward basic residues. Over residues 821-830 (AVRSQRSLSV) the composition is skewed to polar residues. Basic and acidic residues predominate over residues 835-844 (ALIDPQKEEE). LRR repeat units lie at residues 856-877 (WLKT…NAAS), 883-905 (ALNV…ARLT), 906-928 (LLSM…YGML), and 930-952 (RLWS…VNVE). The region spanning 969 to 1167 (ESKTYHHLRL…NTIYRTAWEV (199 aa)) is the Roc domain. GTP contacts are provided by residues 982 to 989 (GSDGVGKS), 1040 to 1044 (DFGGQ), and 1098 to 1101 (TNLD). The 190-residue stretch at 1233-1422 (FYAACTFLHD…GFWSRLVTRI (190 aa)) folds into the COR domain. Disordered regions lie at residues 1361-1382 (CPSP…TDQN) and 1596-1633 (RNGS…RTTG). Composition is skewed to polar residues over residues 1366–1382 (GSPT…TDQN) and 1620–1633 (ITSS…RTTG). The Protein kinase domain occupies 1694–1992 (LKRSRMLGRG…LVGFCAAPEF (299 aa)). ATP-binding positions include 1700–1708 (LGRGAFGFV) and lysine 1726. Residue aspartate 1847 is the Proton acceptor of the active site.

This sequence belongs to the protein kinase superfamily. TKL Ser/Thr protein kinase family. ROCO subfamily. Requires Mg(2+) as cofactor. Mn(2+) is required as a cofactor. As to expression, expressed in cell bodies, but not in dendritic or axonal processes, of adult head neurons. Also present in non-neuronal tissues, such as the body wall musculature and the epithelial cells of the nematode vulva.

The protein localises to the golgi apparatus. The enzyme catalyses L-seryl-[protein] + ATP = O-phospho-L-seryl-[protein] + ADP + H(+). It catalyses the reaction L-threonyl-[protein] + ATP = O-phospho-L-threonyl-[protein] + ADP + H(+). Determines polarized sorting of synaptic vesicle (SV) proteins to the axons by excluding SV proteins from the dendrite-specific transport machinery in the Golgi. Role in stress response. Appears to antagonize the effects of pink-1 both in the regulation of axon guidance and stress response. In Caenorhabditis elegans, this protein is Leucine-rich repeat serine/threonine-protein kinase 1 (lrk-1).